Consider the following 894-residue polypeptide: Translation initiation factor IF-2 (894 aa).

Residues 25-304 (ADAGMNKASS…KPTSMQHGFD (280 aa)) form a disordered region. 5 stretches are compositionally biased toward basic and acidic residues: residues 33–44 (SSDHVSDEEKQK), 52–62 (EHGDKSGESEP), 101–174 (STIE…KEMN), 184–239 (AKKE…ENSD), and 247–263 (YARE…EGGA). The span at 283–293 (RGGKGRNKGKL) shows a compositional bias: basic residues. Positions 393–562 (PRAPVVTIMG…LLQSEVLELT (170 aa)) constitute a tr-type G domain. Positions 402–409 (GHVDHGKT) are G1. GTP is bound at residue 402 to 409 (GHVDHGKT). The interval 427 to 431 (GITQH) is G2. The G3 stretch occupies residues 448–451 (DTPG). GTP-binding positions include 448–452 (DTPGH) and 502–505 (NKID). Residues 502–505 (NKID) are G4. Residues 538 to 540 (SAK) are G5.

It belongs to the TRAFAC class translation factor GTPase superfamily. Classic translation factor GTPase family. IF-2 subfamily.

The protein localises to the cytoplasm. In terms of biological role, one of the essential components for the initiation of protein synthesis. Protects formylmethionyl-tRNA from spontaneous hydrolysis and promotes its binding to the 30S ribosomal subunits. Also involved in the hydrolysis of GTP during the formation of the 70S ribosomal complex. The polypeptide is Translation initiation factor IF-2 (Vibrio campbellii (strain ATCC BAA-1116)).